A 217-amino-acid chain; its full sequence is Small ribosomal subunit protein uS3 (217 aa).

Positions 38 to 106 constitute a KH type-2 domain; that stretch reads IRKFVQKELA…QVHINIIEIK (69 aa).

This sequence belongs to the universal ribosomal protein uS3 family. As to quaternary structure, part of the 30S ribosomal subunit. Forms a tight complex with proteins S10 and S14.

Its function is as follows. Binds the lower part of the 30S subunit head. Binds mRNA in the 70S ribosome, positioning it for translation. The polypeptide is Small ribosomal subunit protein uS3 (Streptococcus pneumoniae serotype 19F (strain G54)).